The chain runs to 628 residues: Siderophore iron transporter 1 (628 aa).

14 helical membrane passes run 68-88, 107-127, 132-152, 164-184, 194-214, 225-245, 285-305, 317-337, 354-374, 394-414, 420-440, 448-468, 488-508, and 559-579; these read IYRV…GLDG, LLST…IFFA, IFGR…GTII, VGGC…EVIA, LLAL…SGNV, GIGM…ICML, IIGM…FTLA, IIVP…LWEI, GIFF…MQGD, ITSL…FILI, KPFI…LVHY, SGII…TYVT, LYLA…GAVW, and KILC…AFML.

The protein belongs to the major facilitator superfamily.

It localises to the endosome membrane. Involved in the transport of siderophore ferrioxamine B and so has a role in iron homeostasis. The sequence is that of Siderophore iron transporter 1 (SIT1) from Saccharomyces cerevisiae (strain ATCC 204508 / S288c) (Baker's yeast).